Here is a 651-residue protein sequence, read N- to C-terminus: Carboxypeptidase S1 homolog A (651 aa).

The signal sequence occupies residues 1 to 19 (MHLATGLAVALPFIGAASA). Cysteines 50 and 121 form a disulfide. Residues N77, N125, N128, N161, N184, and N202 are each glycosylated (N-linked (GlcNAc...) asparagine). S238 is an active-site residue. N-linked (GlcNAc...) asparagine glycosylation is found at N260, N299, N308, N347, and N410. Cystine bridges form between C325/C361 and C332/C354. The active site involves D458. C461 contacts substrate. N-linked (GlcNAc...) asparagine glycans are attached at residues N474 and N504. H515 is a catalytic residue. E516 provides a ligand contact to substrate. A disordered region spans residues 604–630 (KSPAGKKQGPPPTSTSPPSPTSSSEGS). Pro residues predominate over residues 612–623 (GPPPTSTSPPSP). S625 carries the GPI-anchor amidated serine lipid modification. The propeptide at 626-651 (SSEGSVKEFSVSVLGVSVLAAITFFL) is removed in mature form.

It belongs to the peptidase S10 family.

It localises to the cell membrane. It catalyses the reaction Preferential release of a C-terminal arginine or lysine residue.. In terms of biological role, extracellular serine carboxypeptidase that contributes to pathogenicity. The sequence is that of Carboxypeptidase S1 homolog A (SCPA) from Arthroderma otae (strain ATCC MYA-4605 / CBS 113480) (Microsporum canis).